The sequence spans 114 residues: Putative small ubiquitin-related modifier 4 (114 aa).

Residues 1–20 form a disordered region; the sequence is MSTTSRVGSNEVKMEGQKRK. Residues 26–104 form the Ubiquitin-like domain; that stretch reads THVTLKVKGQ…IDAMLCQQSG (79 aa). Residue Gly104 forms a Glycyl lysine isopeptide (Gly-Lys) (interchain with K-? in acceptor proteins) linkage.

Belongs to the ubiquitin family. SUMO subfamily. As to quaternary structure, interacts with SAE2, SCE1, SIZ1 and MMS21 Covalently attached to a number of proteins.

It localises to the nucleus. Its subcellular location is the cytoplasm. In terms of biological role, ubiquitin-like protein which can be covalently attached to target lysines as a monomer. Does not seem to be involved in protein degradation and may function as an antagonist of ubiquitin in the degradation process. The polypeptide is Putative small ubiquitin-related modifier 4 (SUMO4) (Arabidopsis thaliana (Mouse-ear cress)).